The primary structure comprises 363 residues: Cyanuric acid amidohydrolase (363 aa).

Positions 1–104 (MYHIDVFRIP…TVFARRPAID (104 aa)) are RU A. Substrate contacts are provided by residues Arg-52 and 83–84 (SG). Residues 112–249 (RLTLGIAFTR…NVVIAIGMSE (138 aa)) form an RU B region. The active site involves Lys-162. Substrate-binding positions include Arg-194 and 232 to 233 (SA). The Nucleophile role is filled by Ser-232. The segment at 255–363 (LVIAHGVMSD…GGPFAVIARA (109 aa)) is RU C. Glu-297 contacts Mg(2+). Substrate is bound by residues Arg-324 and 343-344 (SG). Mg(2+) contacts are provided by Ala-346, Gln-349, Gly-350, Pro-351, and Gly-354.

Belongs to the cyclic amide hydrolase (CyAH) family. Homotetramer.

It catalyses the reaction cyanurate + H2O = 1-carboxybiuret + H(+). It participates in xenobiotic degradation; atrazine degradation; biuret from cyanurate: step 1/1. With respect to regulation, inhibited by barbituric acid. Responsible for the hydrolysis of cyanuric acid, an intermediate formed during catabolism of s-triazine based compounds in herbicides such as atrazine and polymers such as melamine. Catalyzes the hydrolytic opening of the s-triazine ring of cyanuric acid (2,4,6-trihydroxy-s-triazine) to yield carbon dioxide and carboxybiuret, which spontaneously decarboxylates to biuret. The polypeptide is Cyanuric acid amidohydrolase (atzD) (Pseudomonas sp. (strain ADP)).